We begin with the raw amino-acid sequence, 369 residues long: IST1-like protein (369 aa).

Residues 12 to 59 (KLKVQLKLAVSRIQILKNKKANIVRDEKRNVAELLRKKNEESARIRVE) adopt a coiled-coil conformation. Residues 224–354 (QIIQQQQQPQ…SSDTGYPDYD (131 aa)) form a disordered region. 2 stretches are compositionally biased toward low complexity: residues 225–239 (IIQQ…SFPI) and 246–270 (PTFS…SPQF). Positions 277–305 (FYNNNSGNQTPQFPTISTNNSDGYSNDKF) are enriched in polar residues. The span at 306-337 (NNGNNNYNNNNNNNNNNNNNNNHNNNNNNNNN) shows a compositional bias: low complexity.

The protein belongs to the IST1 family.

This Dictyostelium discoideum (Social amoeba) protein is IST1-like protein.